The following is a 235-amino-acid chain: Small ribosomal subunit protein uS2c (235 aa).

The protein belongs to the universal ribosomal protein uS2 family.

It is found in the plastid. The protein localises to the chloroplast. The protein is Small ribosomal subunit protein uS2c (rps2) of Zygnema circumcarinatum (Green alga).